The sequence spans 152 residues: Large ribosomal subunit protein uL15 (152 aa).

Positions methionine 1 to glycine 66 are disordered. The segment covering glutamate 24–asparagine 36 has biased composition (gly residues).

It belongs to the universal ribosomal protein uL15 family. In terms of assembly, part of the 50S ribosomal subunit.

Its function is as follows. Binds to the 23S rRNA. The polypeptide is Large ribosomal subunit protein uL15 (Akkermansia muciniphila (strain ATCC BAA-835 / DSM 22959 / JCM 33894 / BCRC 81048 / CCUG 64013 / CIP 107961 / Muc)).